Reading from the N-terminus, the 195-residue chain is Rac-like GTP-binding protein ARAC4 (195 aa).

GTP-binding positions include 12-19 (GDGAVGKT), 30-37 (FPTDYVPT), 59-63 (DTAGQ), and 117-120 (TKLD). The short motif at 34-42 (YVPTVFDNF) is the Effector region element. Cys192 carries the post-translational modification Cysteine methyl ester. Residue Cys192 is the site of S-geranylgeranyl cysteine attachment. Positions 193–195 (AFL) are cleaved as a propeptide — removed in mature form.

It belongs to the small GTPase superfamily. Rho family. As to quaternary structure, interacts with SPK1, ICR1, ICR5 and PIR. Ubiquitous.

It localises to the cytoplasm. The protein resides in the cell membrane. In terms of biological role, inactive GDP-bound Rho GTPases reside in the cytosol, are found in a complex with Rho GDP-dissociation inhibitors (Rho GDIs), and are released from the GDI protein in order to translocate to membranes upon activation. Involved in cell polarity control during the actin-dependent tip growth of root hairs, thus regulating root hair length and root hair initiation. Contributes, in a SPK1-dependent manner, to the prevention of cortical microtubules organization into parallel arrays oriented perpendicular to the axis of cell elongation to limit anisotropic cell growth during petal development. May regulate a WAVE complex that activates the Arp2/3 complex. The sequence is that of Rac-like GTP-binding protein ARAC4 from Arabidopsis thaliana (Mouse-ear cress).